The sequence spans 278 residues: Bifunctional protein FolD (278 aa).

Residues 165–167 (GRS), Ser190, and Thr231 each bind NADP(+).

The protein belongs to the tetrahydrofolate dehydrogenase/cyclohydrolase family. Homodimer.

The catalysed reaction is (6R)-5,10-methylene-5,6,7,8-tetrahydrofolate + NADP(+) = (6R)-5,10-methenyltetrahydrofolate + NADPH. The enzyme catalyses (6R)-5,10-methenyltetrahydrofolate + H2O = (6R)-10-formyltetrahydrofolate + H(+). It participates in one-carbon metabolism; tetrahydrofolate interconversion. Functionally, catalyzes the oxidation of 5,10-methylenetetrahydrofolate to 5,10-methenyltetrahydrofolate and then the hydrolysis of 5,10-methenyltetrahydrofolate to 10-formyltetrahydrofolate. The sequence is that of Bifunctional protein FolD from Clostridium acetobutylicum (strain ATCC 824 / DSM 792 / JCM 1419 / IAM 19013 / LMG 5710 / NBRC 13948 / NRRL B-527 / VKM B-1787 / 2291 / W).